We begin with the raw amino-acid sequence, 68 residues long: DNA gyrase inhibitor YacG (68 aa).

The Zn(2+) site is built by cysteine 10, cysteine 13, cysteine 29, and cysteine 33. A disordered region spans residues glutamate 45 to histidine 68. The segment covering glutamate 53 to histidine 68 has biased composition (acidic residues).

This sequence belongs to the DNA gyrase inhibitor YacG family. As to quaternary structure, interacts with GyrB. Requires Zn(2+) as cofactor.

Functionally, inhibits all the catalytic activities of DNA gyrase by preventing its interaction with DNA. Acts by binding directly to the C-terminal domain of GyrB, which probably disrupts DNA binding by the gyrase. The protein is DNA gyrase inhibitor YacG of Yersinia pseudotuberculosis serotype O:1b (strain IP 31758).